Consider the following 59-residue polypeptide: uncharacterized protein (59 aa).

An N-terminal signal peptide occupies residues 1–21 (MYLFYVLLSSLFLSALIYVIG). The Extracellular portion of the chain corresponds to 22-24 (KSH). Residues 25–45 (PNLFMFISLFVNVVTILYLVF) form a helical membrane-spanning segment. Residues 46–59 (KDYGQYIIAKPINT) lie on the Cytoplasmic side of the membrane.

It localises to the host membrane. This is an uncharacterized protein from Acidianus convivator (ABV).